Here is a 521-residue protein sequence, read N- to C-terminus: Beta-glucosidase 6 (521 aa).

Residues 1-38 (MGRIKSSSGRCSTARLEAVAVLVVVFGVASSSLRGCIA) form the signal peptide. Residues Q64, H165, and 210–211 (NE) contribute to the a beta-D-glucoside site. E211 serves as the catalytic Proton donor. C230 and C238 form a disulfide bridge. N291 carries N-linked (GlcNAc...) asparagine glycosylation. Y354 is an a beta-D-glucoside binding site. 2 N-linked (GlcNAc...) asparagine glycosylation sites follow: N362 and N372. Residues E427, W477, 484–485 (EW), and F493 contribute to the a beta-D-glucoside site. E427 acts as the Nucleophile in catalysis.

It belongs to the glycosyl hydrolase 1 family. As to quaternary structure, homodimer.

The protein localises to the secreted. The catalysed reaction is Hydrolysis of terminal, non-reducing beta-D-glucosyl residues with release of beta-D-glucose.. In terms of biological role, hydrolyzes glycosides, oligosaccharides and hydrophobic glycosides. Possesses gibberellin ester beta-D-glucosidase activity. Can hydrolyze gibberellin A4 beta-D-glucosyl ester in vitro. The chain is Beta-glucosidase 6 from Oryza sativa subsp. japonica (Rice).